The primary structure comprises 324 residues: NADH-ubiquinone oxidoreductase chain 1 (324 aa).

The next 9 membrane-spanning stretches (helical) occupy residues 9–29 (ILNP…LTLL), 43–63 (PNIV…KLFI), 75–95 (ILFI…WAPL), 106–126 (LAIL…LGSG), 146–166 (ISYE…TGGF), 177–197 (SIWL…STLA), 228–250 (LFFL…LFLG), 259–279 (ELTT…FLWV), and 299–319 (FLPL…TFAG).

The protein belongs to the complex I subunit 1 family.

It localises to the mitochondrion inner membrane. It catalyses the reaction a ubiquinone + NADH + 5 H(+)(in) = a ubiquinol + NAD(+) + 4 H(+)(out). In terms of biological role, core subunit of the mitochondrial membrane respiratory chain NADH dehydrogenase (Complex I) that is believed to belong to the minimal assembly required for catalysis. Complex I functions in the transfer of electrons from NADH to the respiratory chain. The immediate electron acceptor for the enzyme is believed to be ubiquinone. The protein is NADH-ubiquinone oxidoreductase chain 1 (MT-ND1) of Tetraodon nigroviridis (Spotted green pufferfish).